The sequence spans 126 residues: Small ribosomal subunit protein uS12 (126 aa).

The tract at residues 1–28 (MPTINQLVRKGRQSETTKSKSPALQDCP) is disordered. Residue Asp-89 is modified to 3-methylthioaspartic acid. Positions 103–126 (DTQGVKDRKQARSKYGAKRAKAGK) are disordered. A compositionally biased stretch (basic residues) spans 113–126 (ARSKYGAKRAKAGK).

Belongs to the universal ribosomal protein uS12 family. In terms of assembly, part of the 30S ribosomal subunit. Contacts proteins S8 and S17. May interact with IF1 in the 30S initiation complex.

Functionally, with S4 and S5 plays an important role in translational accuracy. Its function is as follows. Interacts with and stabilizes bases of the 16S rRNA that are involved in tRNA selection in the A site and with the mRNA backbone. Located at the interface of the 30S and 50S subunits, it traverses the body of the 30S subunit contacting proteins on the other side and probably holding the rRNA structure together. The combined cluster of proteins S8, S12 and S17 appears to hold together the shoulder and platform of the 30S subunit. The sequence is that of Small ribosomal subunit protein uS12 from Paraburkholderia phytofirmans (strain DSM 17436 / LMG 22146 / PsJN) (Burkholderia phytofirmans).